A 1122-amino-acid chain; its full sequence is TSET complex member tstF (1122 aa).

Low complexity predominate over residues 88–126 (SSSASGINGTNNNNSGSNSSNNNNNNNGSLSNSPNNNNN). 2 disordered regions span residues 88 to 131 (SSSA…AFIG) and 178 to 215 (QTLH…STNS). The span at 178 to 190 (QTLHNRSPNNTIK) shows a compositional bias: polar residues. Residues 191 to 215 (LSPNSSNNDSLNNNNNNINNNSTNS) are compositionally biased toward low complexity. WD repeat units lie at residues 298–337 (FENK…IEKQ), 342–381 (PKGT…LATQ), and 383–422 (SKVH…EVSK). The disordered stretch occupies residues 731 to 775 (NGSVGGSSSNNSANSNNSNNNNNNNNNNSNNSNNNNNSSQPILEP).

As to quaternary structure, component of the TSET complex, a heterohexamer composed of tstA, tstB, tstC, tstD, tstE and tstF, which may act in plasma membrane turnover. tstA, tstB, tstC and tstD are likely to be the core complex members with tstE and tstF acting as associated scaffold proteins.

In Dictyostelium discoideum (Social amoeba), this protein is TSET complex member tstF.